Consider the following 533-residue polypeptide: MYSQVEHPAGGYKKLFETVEELSSPVTAHVTGRIPTWLRGSLLRCGPGLFEVGAEPFYHLFDGQALLHKFDFKEGHVTYHRRFVRTDAYVRAMTEKRIVITEFGTYAYPDPCKNIFSRFFSYFKGVEVTDNALVNVYPVGEDYYACTETNFITKINPDTLETIKQVDLCKYVSVNGATAHPHVENDGTVYNIGNCFGKNFSLAYNIIRIPPLQADKEDPMNKSEVVVQFPCSDRFKPSYVHSFGLTPNYIVFVETPVKINLLKFLSSWSLWGANYMDCFESNETMGVWLHVAEKKKGRLLNIKYRTSAFNLFHHINTFEDNGFLIVDLCTWKGFEFVYNYLYLANLRANWDEVKKQAEKAPQPEARRYVLPLRIDKADTGKNLVTLPYTTATATLRSDETVWLEPEVIFSGPRHAFEFPQINYKKYGGKPYTYTYGLGLNHFVPDRLCKLNVKTKETWVWQEPDSYPSEPIFVSHPDALEEDDGVVLSIVISPGSGPKPAYLLILNAKDMSEVARAEVEVNIPVTFHGLFKRA.

A lipid anchor (S-palmitoyl cysteine; in membrane form) is attached at C112. A Phosphoserine modification is found at S117. A Fe cation-binding site is contributed by H180. C231 carries the S-palmitoyl cysteine; in membrane form lipid modification. Fe cation contacts are provided by H241 and H313. C329 carries S-palmitoyl cysteine; in membrane form lipidation. Fe cation is bound at residue H527.

Belongs to the carotenoid oxygenase family. Requires Fe(2+) as cofactor. Palmitoylation by LRAT regulates ligand binding specificity; the palmitoylated form (membrane form) specifically binds all-trans-retinyl-palmitate, while the soluble unpalmitoylated form binds all-trans-retinol (vitamin A). As to expression, retinal pigment epithelium specific.

It is found in the cytoplasm. It localises to the cell membrane. The protein resides in the microsome membrane. The catalysed reaction is an all-trans-retinyl ester + H2O = 11-cis-retinol + a fatty acid + H(+). It catalyses the reaction lutein = (3R,3'S)-zeaxanthin. The enzyme catalyses all-trans-retinyl hexadecanoate + H2O = 11-cis-retinol + hexadecanoate + H(+). In terms of biological role, critical isomerohydrolase in the retinoid cycle involved in regeneration of 11-cis-retinal, the chromophore of rod and cone opsins. Catalyzes the cleavage and isomerization of all-trans-retinyl fatty acid esters to 11-cis-retinol which is further oxidized by 11-cis retinol dehydrogenase to 11-cis-retinal for use as visual chromophore. Essential for the production of 11-cis retinal for both rod and cone photoreceptors. Also capable of catalyzing the isomerization of lutein to meso-zeaxanthin an eye-specific carotenoid. The soluble form binds vitamin A (all-trans-retinol), making it available for LRAT processing to all-trans-retinyl ester. The membrane form, palmitoylated by LRAT, binds all-trans-retinyl esters, making them available for IMH (isomerohydrolase) processing to all-cis-retinol. The soluble form is regenerated by transferring its palmitoyl groups onto 11-cis-retinol, a reaction catalyzed by LRAT. The polypeptide is Retinoid isomerohydrolase (RPE65) (Gallus gallus (Chicken)).